The primary structure comprises 208 residues: GTP cyclohydrolase 1 (208 aa).

Zn(2+) is bound by residues cysteine 98, histidine 101, and cysteine 169.

The protein belongs to the GTP cyclohydrolase I family. In terms of assembly, toroid-shaped homodecamer, composed of two pentamers of five dimers.

The enzyme catalyses GTP + H2O = 7,8-dihydroneopterin 3'-triphosphate + formate + H(+). It functions in the pathway cofactor biosynthesis; 7,8-dihydroneopterin triphosphate biosynthesis; 7,8-dihydroneopterin triphosphate from GTP: step 1/1. In Agrobacterium fabrum (strain C58 / ATCC 33970) (Agrobacterium tumefaciens (strain C58)), this protein is GTP cyclohydrolase 1.